The following is a 272-amino-acid chain: Acidic leucine-rich nuclear phosphoprotein 32-related protein 2 (272 aa).

3 LRR repeats span residues 57-78, 79-100, and 106-127; these read SLEE…PRLP, ALRR…AAVA, and TLRH…APLA. An LRRCT domain is found at 139 to 184; it reads CPVTKAKGYRDKVFALIPSLKFLDGMDAEGNDCLDSDDEEDEEEDE. The tract at residues 163–272 is disordered; the sequence is GMDAEGNDCL…DSEDDANGDN (110 aa). The span at 164-241 shows a compositional bias: acidic residues; it reads MDAEGNDCLD…DEAGADEEDE (78 aa). Positions 248-257 are enriched in polar residues; the sequence is SKGSSGSAQP.

It belongs to the ANP32 family.

This Oryza sativa subsp. japonica (Rice) protein is Acidic leucine-rich nuclear phosphoprotein 32-related protein 2.